The sequence spans 722 residues: Fatty acid oxidation complex subunit alpha (722 aa).

Positions 1–189 are enoyl-CoA hydratase/isomerase; it reads MIYQGKSLSA…AQGAIDAVVE (189 aa). Aspartate 296 contacts substrate. The 3-hydroxyacyl-CoA dehydrogenase stretch occupies residues 311–722; it reads TKAVNKAAVL…SYFTTDVKLA (412 aa). Residues methionine 325, aspartate 344, 401-403, lysine 408, and serine 430 contribute to the NAD(+) site; that span reads VVE. The active-site For 3-hydroxyacyl-CoA dehydrogenase activity is the histidine 451. Asparagine 454 contacts NAD(+). Substrate contacts are provided by asparagine 501 and tyrosine 661.

This sequence in the N-terminal section; belongs to the enoyl-CoA hydratase/isomerase family. In the C-terminal section; belongs to the 3-hydroxyacyl-CoA dehydrogenase family. Heterotetramer of two alpha chains (FadB) and two beta chains (FadA).

The enzyme catalyses a (3S)-3-hydroxyacyl-CoA + NAD(+) = a 3-oxoacyl-CoA + NADH + H(+). It carries out the reaction a (3S)-3-hydroxyacyl-CoA = a (2E)-enoyl-CoA + H2O. The catalysed reaction is a 4-saturated-(3S)-3-hydroxyacyl-CoA = a (3E)-enoyl-CoA + H2O. It catalyses the reaction (3S)-3-hydroxybutanoyl-CoA = (3R)-3-hydroxybutanoyl-CoA. The enzyme catalyses a (3Z)-enoyl-CoA = a 4-saturated (2E)-enoyl-CoA. It carries out the reaction a (3E)-enoyl-CoA = a 4-saturated (2E)-enoyl-CoA. Its pathway is lipid metabolism; fatty acid beta-oxidation. Involved in the aerobic and anaerobic degradation of long-chain fatty acids via beta-oxidation cycle. Catalyzes the formation of 3-oxoacyl-CoA from enoyl-CoA via L-3-hydroxyacyl-CoA. It can also use D-3-hydroxyacyl-CoA and cis-3-enoyl-CoA as substrate. This Colwellia psychrerythraea (strain 34H / ATCC BAA-681) (Vibrio psychroerythus) protein is Fatty acid oxidation complex subunit alpha.